Here is a 326-residue protein sequence, read N- to C-terminus: MASATNLADNIVVVECSNGWEARAEADGRLLVLINNHTVELSAGLGSAGEFYSVLTDVGVRVACSSGYAIVLAQISGLPHVGREPGNFSNITFTGNLANYYTAYGIVDSGYRGVVKAVQFANGVNTVVPPGCMSLGLVLVKLSTETINVTNINLTENGRSPRVNIFYDYFAPKRDEDAGYDISAQTNATIEPDESYFVELPIVFSSSNPAVTPCIFGRSSMNRRGLIVLPTRWVTGRTCCFFILNINKYPVYITKGQRVAQLVLTEDIDEALIPTNVNYNTPFPTYSPTGAVKHNPTPILWKFTEAFDHDAPSSARSEGGFGSTGL.

Residues 218-220 and 321-322 contribute to the substrate site; these read RSS and FG.

Belongs to the dUTPase family. Mg(2+) serves as cofactor.

The enzyme catalyses dUTP + H2O = dUMP + diphosphate + H(+). Involved in nucleotide metabolism: produces dUMP, the immediate precursor of thymidine nucleotides and decreases the intracellular concentration of dUTP to avoid uracil incorporation into viral DNA. This chain is Deoxyuridine 5'-triphosphate nucleotidohydrolase, found in Equus caballus (Horse).